The chain runs to 361 residues: MASANSSAGIRWSRQETRTLLSILGEAEYIQRLQTVHHNADVYQAVSKRMQQEGFRRTERQCRSKFKVLKALYLKAYVAHATSMGEPPHCPFYDTLDQLLRNQIVTDPDNLMEDAAWAKHCDQNLVASDAPGEEGTGILKSKRTQAADHQPILKTVKASDEDCQLRISDRIRETSDLEDSWDESSGAGCSQGTPSYSSSHSLFRGAVAPCQSSPMARLGVSGEPSPCTSTNRSTPGVASTPQTPVSSSRAGFVSGGDRPLTSEPPPRWARRRRRSVARTIAAELAENRRLARELSKREEEKLDRLIAIGEEASAQQDTANELRRDAVIAVRRLATAVEEATGAFQLGLEKLLQRLISNTKS.

The Myb-like domain maps to 11–70 (RWSRQETRTLLSILGEAEYIQRLQTVHHNADVYQAVSKRMQQEGFRRTERQCRSKFKVLK). Disordered stretches follow at residues 174–198 (TSDL…SYSS) and 217–272 (RLGV…ARRR). Polar residues-rich tracts occupy residues 187-198 (AGCSQGTPSYSS) and 226-249 (PCTS…SSSR).

The polypeptide is Myb/SANT-like DNA-binding domain-containing protein 7 (Homo sapiens (Human)).